The sequence spans 556 residues: 2-succinyl-5-enolpyruvyl-6-hydroxy-3-cyclohexene-1-carboxylate synthase (556 aa).

Belongs to the TPP enzyme family. MenD subfamily. As to quaternary structure, homodimer. It depends on Mg(2+) as a cofactor. Requires Mn(2+) as cofactor. Thiamine diphosphate is required as a cofactor.

It carries out the reaction isochorismate + 2-oxoglutarate + H(+) = 5-enolpyruvoyl-6-hydroxy-2-succinyl-cyclohex-3-ene-1-carboxylate + CO2. Its pathway is quinol/quinone metabolism; 1,4-dihydroxy-2-naphthoate biosynthesis; 1,4-dihydroxy-2-naphthoate from chorismate: step 2/7. It participates in quinol/quinone metabolism; menaquinone biosynthesis. Functionally, catalyzes the thiamine diphosphate-dependent decarboxylation of 2-oxoglutarate and the subsequent addition of the resulting succinic semialdehyde-thiamine pyrophosphate anion to isochorismate to yield 2-succinyl-5-enolpyruvyl-6-hydroxy-3-cyclohexene-1-carboxylate (SEPHCHC). The sequence is that of 2-succinyl-5-enolpyruvyl-6-hydroxy-3-cyclohexene-1-carboxylate synthase from Escherichia fergusonii (strain ATCC 35469 / DSM 13698 / CCUG 18766 / IAM 14443 / JCM 21226 / LMG 7866 / NBRC 102419 / NCTC 12128 / CDC 0568-73).